Reading from the N-terminus, the 427-residue chain is Serine hydroxymethyltransferase (427 aa).

Residues Leu122 and 126–128 (GHL) each bind (6S)-5,6,7,8-tetrahydrofolate. Residue Lys231 is modified to N6-(pyridoxal phosphate)lysine. Residues Glu247 and 355 to 357 (SPF) contribute to the (6S)-5,6,7,8-tetrahydrofolate site.

Belongs to the SHMT family. As to quaternary structure, homodimer. Requires pyridoxal 5'-phosphate as cofactor.

It localises to the cytoplasm. It carries out the reaction (6R)-5,10-methylene-5,6,7,8-tetrahydrofolate + glycine + H2O = (6S)-5,6,7,8-tetrahydrofolate + L-serine. Its pathway is one-carbon metabolism; tetrahydrofolate interconversion. It participates in amino-acid biosynthesis; glycine biosynthesis; glycine from L-serine: step 1/1. Its function is as follows. Catalyzes the reversible interconversion of serine and glycine with tetrahydrofolate (THF) serving as the one-carbon carrier. This reaction serves as the major source of one-carbon groups required for the biosynthesis of purines, thymidylate, methionine, and other important biomolecules. Also exhibits THF-independent aldolase activity toward beta-hydroxyamino acids, producing glycine and aldehydes, via a retro-aldol mechanism. This is Serine hydroxymethyltransferase from Microcystis aeruginosa (strain NIES-843 / IAM M-2473).